Consider the following 342-residue polypeptide: Transmembrane protein 59-like (342 aa).

Residues 1-24 form the signal peptide; the sequence is MAAVALMPPPLLLLLLLASPPAAS. A glycan (N-linked (GlcNAc...) asparagine) is linked at asparagine 97. Residues 268–290 form a helical membrane-spanning segment; the sequence is WILACCLFLSVLVMLWLSCSTLV. A Microbody targeting signal motif is present at residues 340 to 342; sequence TKL.

Belongs to the TMEM59 family. In terms of tissue distribution, expressed preferentially at high level in the brain.

It is found in the golgi apparatus membrane. In terms of biological role, modulates the O-glycosylation and complex N-glycosylation steps occurring during the Golgi maturation of APP. Inhibits APP transport to the cell surface and further shedding. The polypeptide is Transmembrane protein 59-like (TMEM59L) (Homo sapiens (Human)).